A 218-amino-acid polypeptide reads, in one-letter code: 23 kDa integral membrane protein (218 aa).

Residues 1 to 12 (MATLGTGMRCLK) lie on the Cytoplasmic side of the membrane. The chain crosses the membrane as a helical span at residues 13–36 (SCVFVLNIICLLCSLVLIGAGAYV). Residues 37–55 (EVKFSQYGDNLHKVWQAAP) are Extracellular-facing. Residues 56–71 (IAIIVVGVIILIVSFL) form a helical membrane-spanning segment. Residues 72-82 (GCCGAIKENVC) lie on the Cytoplasmic side of the membrane. Residues 83–108 (MLYMYAFFLVVLLIAELAAAIVAVVY) form a helical membrane-spanning segment. Residues 109-183 (KDRIDSEIDA…SVFGAFLKRN (75 aa)) lie on the Extracellular side of the membrane. An N-linked (GlcNAc...) asparagine glycan is attached at Asn-165. A helical membrane pass occupies residues 184–205 (LVIVACVAFGVCFFQLLSIVIA). The Cytoplasmic portion of the chain corresponds to 206–218 (CCLGRQIKEYENV).

Belongs to the tetraspanin (TM4SF) family.

Its subcellular location is the membrane. This Schistosoma mansoni (Blood fluke) protein is 23 kDa integral membrane protein.